Consider the following 347-residue polypeptide: tRNA N6-adenosine threonylcarbamoyltransferase (347 aa).

Residues His113 and His117 each coordinate Fe cation. Substrate-binding positions include 136 to 140 (LVSGG), Asp170, Gly183, Asp187, and Asn282. Asp310 provides a ligand contact to Fe cation.

This sequence belongs to the KAE1 / TsaD family. Fe(2+) serves as cofactor.

Its subcellular location is the cytoplasm. The catalysed reaction is L-threonylcarbamoyladenylate + adenosine(37) in tRNA = N(6)-L-threonylcarbamoyladenosine(37) in tRNA + AMP + H(+). Its function is as follows. Required for the formation of a threonylcarbamoyl group on adenosine at position 37 (t(6)A37) in tRNAs that read codons beginning with adenine. Is involved in the transfer of the threonylcarbamoyl moiety of threonylcarbamoyl-AMP (TC-AMP) to the N6 group of A37, together with TsaE and TsaB. TsaD likely plays a direct catalytic role in this reaction. This is tRNA N6-adenosine threonylcarbamoyltransferase from Cutibacterium acnes (strain DSM 16379 / KPA171202) (Propionibacterium acnes).